A 283-amino-acid chain; its full sequence is Bis(5'-nucleosyl)-tetraphosphatase, symmetrical (283 aa).

It belongs to the Ap4A hydrolase family.

It catalyses the reaction P(1),P(4)-bis(5'-adenosyl) tetraphosphate + H2O = 2 ADP + 2 H(+). In terms of biological role, hydrolyzes diadenosine 5',5'''-P1,P4-tetraphosphate to yield ADP. This is Bis(5'-nucleosyl)-tetraphosphatase, symmetrical from Cronobacter sakazakii (strain ATCC BAA-894) (Enterobacter sakazakii).